A 205-amino-acid chain; its full sequence is Basonuclin zinc finger protein homolog (205 aa).

2 C2H2-type zinc fingers span residues 107–130 (VACD…SAVH) and 135–164 (HTCT…PKLH). Residues 145–168 (QFSSRRSRNRHSSNNNPKLHMPES) are disordered.

Expressed in the VA and VB motor neurons and at lower levels in the SABV neuron pair.

It is found in the nucleus. Functionally, probable transcription factor. Involved in motor neuron fate determination and maintenance, acting as a transcriptional repressor to counteract gene activation by transcription factor unc-3 in a subset of motor neurons. Required throughout development to repress transcription by unc-3, probably acting by binding to specific promoter elements. Represses expression of DA and DB motor neuron-specific effector genes, such as unc-129 and unc-53, in VA and VB motor neurons. The protein is Basonuclin zinc finger protein homolog of Caenorhabditis elegans.